Consider the following 260-residue polypeptide: Pyridoxine 5'-phosphate synthase (260 aa).

N15 is a 3-amino-2-oxopropyl phosphate binding site. Residue 17–18 (DH) coordinates 1-deoxy-D-xylulose 5-phosphate. R26 is a binding site for 3-amino-2-oxopropyl phosphate. The Proton acceptor role is filled by H51. 1-deoxy-D-xylulose 5-phosphate is bound by residues R53 and H58. The active-site Proton acceptor is the E78. Position 108 (T108) interacts with 1-deoxy-D-xylulose 5-phosphate. Catalysis depends on H199, which acts as the Proton donor. 3-amino-2-oxopropyl phosphate contacts are provided by residues G200 and 221–222 (GH).

It belongs to the PNP synthase family. As to quaternary structure, homooctamer; tetramer of dimers.

Its subcellular location is the cytoplasm. It catalyses the reaction 3-amino-2-oxopropyl phosphate + 1-deoxy-D-xylulose 5-phosphate = pyridoxine 5'-phosphate + phosphate + 2 H2O + H(+). Its pathway is cofactor biosynthesis; pyridoxine 5'-phosphate biosynthesis; pyridoxine 5'-phosphate from D-erythrose 4-phosphate: step 5/5. Catalyzes the complicated ring closure reaction between the two acyclic compounds 1-deoxy-D-xylulose-5-phosphate (DXP) and 3-amino-2-oxopropyl phosphate (1-amino-acetone-3-phosphate or AAP) to form pyridoxine 5'-phosphate (PNP) and inorganic phosphate. The polypeptide is Pyridoxine 5'-phosphate synthase (Cupriavidus metallidurans (strain ATCC 43123 / DSM 2839 / NBRC 102507 / CH34) (Ralstonia metallidurans)).